Here is a 285-residue protein sequence, read N- to C-terminus: HTH-type transcriptional regulator HexR (285 aa).

One can recognise an HTH rpiR-type domain in the interval Lys2–Gly78. The segment at residues Ile38–Arg57 is a DNA-binding region (H-T-H motif). One can recognise an SIS domain in the interval Ala122–Val261.

Its function is as follows. Involved in regulation of glucose metabolism. Transcriptional repressor of the gap-1 gene and of the edd-glk-gltR-2 and zwf-pgl-eda operons. Acts by binding directly to an inverted pseudopalindromic sequence in the promoter region. This Pseudomonas aeruginosa (strain ATCC 15692 / DSM 22644 / CIP 104116 / JCM 14847 / LMG 12228 / 1C / PRS 101 / PAO1) protein is HTH-type transcriptional regulator HexR.